Consider the following 669-residue polypeptide: UvrABC system protein B (669 aa).

The Helicase ATP-binding domain occupies 27–414 (ESLQGEHKFQ…EARVIEQVIR (388 aa)). 40-47 (GATGTGKT) contributes to the ATP binding site. The Beta-hairpin signature appears at 93–116 (YYDYYQPEAYIPVTDTYIEKTASI). The Helicase C-terminal domain maps to 431-597 (QVDDLYGEIQ…PINKRANNAI (167 aa)). A UVR domain is found at 628–663 (PDLIQQLEEKMQEAAKKQEFEVAAIYRDRIQHLRDR).

Belongs to the UvrB family. Forms a heterotetramer with UvrA during the search for lesions. Interacts with UvrC in an incision complex.

The protein resides in the cytoplasm. The UvrABC repair system catalyzes the recognition and processing of DNA lesions. A damage recognition complex composed of 2 UvrA and 2 UvrB subunits scans DNA for abnormalities. Upon binding of the UvrA(2)B(2) complex to a putative damaged site, the DNA wraps around one UvrB monomer. DNA wrap is dependent on ATP binding by UvrB and probably causes local melting of the DNA helix, facilitating insertion of UvrB beta-hairpin between the DNA strands. Then UvrB probes one DNA strand for the presence of a lesion. If a lesion is found the UvrA subunits dissociate and the UvrB-DNA preincision complex is formed. This complex is subsequently bound by UvrC and the second UvrB is released. If no lesion is found, the DNA wraps around the other UvrB subunit that will check the other stand for damage. The chain is UvrABC system protein B from Synechocystis sp. (strain ATCC 27184 / PCC 6803 / Kazusa).